The following is a 181-amino-acid chain: Alkyl hydroperoxide reductase AhpD (181 aa).

Cysteine 131 (proton donor) is an active-site residue. Residues cysteine 131 and cysteine 134 are joined by a disulfide bond. Cysteine 134 (cysteine sulfenic acid (-SOH) intermediate) is an active-site residue.

The protein belongs to the AhpD family.

It catalyses the reaction N(6)-[(R)-dihydrolipoyl]-L-lysyl-[lipoyl-carrier protein] + a hydroperoxide = N(6)-[(R)-lipoyl]-L-lysyl-[lipoyl-carrier protein] + an alcohol + H2O. In terms of biological role, antioxidant protein with alkyl hydroperoxidase activity. Required for the reduction of the AhpC active site cysteine residues and for the regeneration of the AhpC enzyme activity. This Rhodopseudomonas palustris (strain BisA53) protein is Alkyl hydroperoxide reductase AhpD.